The following is a 519-amino-acid chain: Ubiquitin carboxyl-terminal hydrolase 30 (519 aa).

Over Met-1–Trp-52 the chain is Mitochondrial intermembrane. A helical membrane pass occupies residues Gly-53–Ile-73. Topologically, residues Ser-74–Lys-519 are cytoplasmic. A USP domain is found at Pro-85–Ile-504. The active-site Nucleophile is the Cys-94. The tract at residues Ser-379–Thr-405 is disordered. His-455 acts as the Proton acceptor in catalysis.

It belongs to the peptidase C19 family.

It is found in the mitochondrion outer membrane. The enzyme catalyses Thiol-dependent hydrolysis of ester, thioester, amide, peptide and isopeptide bonds formed by the C-terminal Gly of ubiquitin (a 76-residue protein attached to proteins as an intracellular targeting signal).. Functionally, deubiquitinating enzyme that acts as a key inhibitor of mitophagy by counteracting the action of parkin (PRKN). This chain is Ubiquitin carboxyl-terminal hydrolase 30 (usp30), found in Xenopus tropicalis (Western clawed frog).